Reading from the N-terminus, the 516-residue chain is RxLR effector protein PITG_15127 (516 aa).

Positions 1–22 (MRLYSGAILCTIATLLISVSTA) are cleaved as a signal peptide. Positions 48–63 (RFLRVSTQNTENGENR) match the RxLR-dEER motif.

This sequence belongs to the RxLR effector family.

It localises to the secreted. The protein localises to the host cell membrane. Its subcellular location is the host nucleus. The protein resides in the host cytoplasm. Effector that enhances P.infestans colonization of Nicotiana benthamiana leaves. This Phytophthora infestans (strain T30-4) (Potato late blight agent) protein is RxLR effector protein PITG_15127.